The sequence spans 343 residues: tRNA N6-adenosine threonylcarbamoyltransferase (343 aa).

Fe cation-binding residues include histidine 120 and histidine 124. Residues 142–146 (VVSGG), aspartate 175, glycine 188, aspartate 192, and asparagine 281 each bind substrate. Aspartate 310 contacts Fe cation.

It belongs to the KAE1 / TsaD family. Fe(2+) serves as cofactor.

The protein localises to the cytoplasm. It carries out the reaction L-threonylcarbamoyladenylate + adenosine(37) in tRNA = N(6)-L-threonylcarbamoyladenosine(37) in tRNA + AMP + H(+). Its function is as follows. Required for the formation of a threonylcarbamoyl group on adenosine at position 37 (t(6)A37) in tRNAs that read codons beginning with adenine. Is involved in the transfer of the threonylcarbamoyl moiety of threonylcarbamoyl-AMP (TC-AMP) to the N6 group of A37, together with TsaE and TsaB. TsaD likely plays a direct catalytic role in this reaction. This is tRNA N6-adenosine threonylcarbamoyltransferase from Bacillus cereus (strain ATCC 14579 / DSM 31 / CCUG 7414 / JCM 2152 / NBRC 15305 / NCIMB 9373 / NCTC 2599 / NRRL B-3711).